We begin with the raw amino-acid sequence, 416 residues long: Multifunctional CCA protein (416 aa).

Residues G8 and R11 each contribute to the ATP site. The CTP site is built by G8 and R11. The Mg(2+) site is built by E21 and D23. Residues R91, R137, and R140 each coordinate ATP. CTP-binding residues include R91, R137, and R140. An HD domain is found at 228-329 (TGIHTLMVLK…LKLFDAVDAW (102 aa)).

The protein belongs to the tRNA nucleotidyltransferase/poly(A) polymerase family. Bacterial CCA-adding enzyme type 1 subfamily. Monomer. Can also form homodimers and oligomers. Mg(2+) is required as a cofactor. Ni(2+) serves as cofactor.

The enzyme catalyses a tRNA precursor + 2 CTP + ATP = a tRNA with a 3' CCA end + 3 diphosphate. It carries out the reaction a tRNA with a 3' CCA end + 2 CTP + ATP = a tRNA with a 3' CCACCA end + 3 diphosphate. Functionally, catalyzes the addition and repair of the essential 3'-terminal CCA sequence in tRNAs without using a nucleic acid template. Adds these three nucleotides in the order of C, C, and A to the tRNA nucleotide-73, using CTP and ATP as substrates and producing inorganic pyrophosphate. tRNA 3'-terminal CCA addition is required both for tRNA processing and repair. Also involved in tRNA surveillance by mediating tandem CCA addition to generate a CCACCA at the 3' terminus of unstable tRNAs. While stable tRNAs receive only 3'-terminal CCA, unstable tRNAs are marked with CCACCA and rapidly degraded. The protein is Multifunctional CCA protein of Photorhabdus laumondii subsp. laumondii (strain DSM 15139 / CIP 105565 / TT01) (Photorhabdus luminescens subsp. laumondii).